The sequence spans 495 residues: Cytochrome P450 monooxygenase 64 (495 aa).

A helical transmembrane segment spans residues 2–22 (FLQIVTSVLATGLLYALISVL). N-linked (GlcNAc...) asparagine glycans are attached at residues Asn-25 and Asn-198. Cys-428 is a binding site for heme.

It belongs to the cytochrome P450 family. It depends on heme as a cofactor.

It is found in the membrane. It functions in the pathway secondary metabolite biosynthesis. Functionally, cytochrome P450 monooxygenase that is able to use 4-ethoxybenzoic acid as a substrate for oxidation. The polypeptide is Cytochrome P450 monooxygenase 64 (Postia placenta (strain ATCC 44394 / Madison 698-R) (Brown rot fungus)).